Consider the following 763-residue polypeptide: ATP-dependent RNA helicase glh-1 (763 aa).

Residues 1–30 (MSDGWSDSESAAKAKTGFGSGGGFGGGNNG) form a disordered region. The span at 18-30 (FGSGGGFGGGNNG) shows a compositional bias: gly residues. 7 consecutive repeat copies span residues 24-33 (FGGGNNGGSG), 34-43 (FGGGKNGGTG), 44-53 (FGGGNTGGSG), 54-63 (FGGGNTGGSG), 64-73 (FGGGKTGGSG), 74-83 (FGGGNTCGSG), and 84-93 (FGGGSTGGSP). The tract at residues 24–93 (FGGGNNGGSG…FGGGSTGGSP (70 aa)) is 7 X 10 AA tandem repeats, Gly-rich. 2 consecutive CCHC-type zinc fingers follow at residues 158–175 (NNCF…DCPE) and 183–200 (RVCY…ECTE). The segment at 193–230 (HTSRECTEERKPREGRTGGFGGGAGFGNNGGNDGFGGD) is disordered. A compositionally biased stretch (basic and acidic residues) spans 194–208 (TSRECTEERKPREGR). The segment covering 209–230 (TGGFGGGAGFGNNGGNDGFGGD) has biased composition (gly residues). 2 CCHC-type zinc fingers span residues 242 to 259 (MKCF…ECPE) and 262 to 279 (RGCF…ECPN). The Q motif signature appears at 341 to 369 (KTFAEANLTETMQKNVAHAGYSKTTPIQQ). In terms of domain architecture, Helicase ATP-binding spans 372-556 (LPLVHQGYDI…RAFLRENYVM (185 aa)). 385–392 (AQTGSGKT) is an ATP binding site. Positions 423–427 (ILTPT) match the Phosphodegron motif. Residues 499–502 (DEAD) carry the DEAD box motif. The region spanning 592–739 (DIDSYTTEKS…IVPDWMQGAA (148 aa)) is the Helicase C-terminal domain.

It belongs to the DEAD box helicase family. DDX4/VASA subfamily. Interacts with csn-5; this may prevent glh-1 degradation induced by kgb-1. Interacts with zyx-1. Interacts (via the N-terminal region containing the four CCHC zinc fingers) with pan-1. Interacts with kgb-1; this may promote glh-1 degradation by the proteasome. In terms of processing, phosphorylated by kgb-1 (in vitro); this may be responsible for its degradation by the proteasome.

It localises to the cytoplasm. The protein localises to the cytoplasmic granule. Its subcellular location is the perinuclear region. The enzyme catalyses ATP + H2O = ADP + phosphate + H(+). Probable ATP-binding RNA helicase. May act redundantly with the P-granule component glh-4 to regulate the formation of the granular structure of P-granules in embryos. Plays a role in positively regulating the localization of pgl-1 to P-granules. May play a role in transgenerational epigenetic inheritance. May protect somatic cells from excessive apoptosis during normal development. This chain is ATP-dependent RNA helicase glh-1, found in Caenorhabditis elegans.